A 148-amino-acid polypeptide reads, in one-letter code: Large ribosomal subunit protein uL15 (148 aa).

Residues 1–50 (MNLSNLKPAEGSTKTRKRIGRGPGSGLGGTSTRGHKGAKSRSGYSKKIGF) are disordered. Positions 21 to 31 (RGPGSGLGGTS) are enriched in gly residues.

Belongs to the universal ribosomal protein uL15 family. As to quaternary structure, part of the 50S ribosomal subunit.

Functionally, binds to the 23S rRNA. The protein is Large ribosomal subunit protein uL15 of Bacteroides fragilis (strain ATCC 25285 / DSM 2151 / CCUG 4856 / JCM 11019 / LMG 10263 / NCTC 9343 / Onslow / VPI 2553 / EN-2).